Reading from the N-terminus, the 88-residue chain is Small ribosomal subunit protein bS20 (88 aa).

Belongs to the bacterial ribosomal protein bS20 family.

Functionally, binds directly to 16S ribosomal RNA. The protein is Small ribosomal subunit protein bS20 of Mycoplasmopsis synoviae (strain 53) (Mycoplasma synoviae).